Reading from the N-terminus, the 459-residue chain is UDP-N-acetylmuramoylalanine--D-glutamate ligase (459 aa).

131–137 (GANGKST) contacts ATP.

The protein belongs to the MurCDEF family.

The protein resides in the cytoplasm. It carries out the reaction UDP-N-acetyl-alpha-D-muramoyl-L-alanine + D-glutamate + ATP = UDP-N-acetyl-alpha-D-muramoyl-L-alanyl-D-glutamate + ADP + phosphate + H(+). Its pathway is cell wall biogenesis; peptidoglycan biosynthesis. Functionally, cell wall formation. Catalyzes the addition of glutamate to the nucleotide precursor UDP-N-acetylmuramoyl-L-alanine (UMA). In Methylococcus capsulatus (strain ATCC 33009 / NCIMB 11132 / Bath), this protein is UDP-N-acetylmuramoylalanine--D-glutamate ligase.